Reading from the N-terminus, the 97-residue chain is Large ribosomal subunit protein uL23 (97 aa).

This sequence belongs to the universal ribosomal protein uL23 family. Part of the 50S ribosomal subunit. Contacts protein L29, and trigger factor when it is bound to the ribosome.

Functionally, one of the early assembly proteins it binds 23S rRNA. One of the proteins that surrounds the polypeptide exit tunnel on the outside of the ribosome. Forms the main docking site for trigger factor binding to the ribosome. The polypeptide is Large ribosomal subunit protein uL23 (Agrobacterium fabrum (strain C58 / ATCC 33970) (Agrobacterium tumefaciens (strain C58))).